Here is a 62-residue protein sequence, read N- to C-terminus: Histone H1.2, embryonic (62 aa).

Positions 1-53 (HVVAAITALKERGGSSMKKQSVFIKKALKSGVEKGTLVQVKGKGASGSFKLGK) constitute an H15 domain.

It belongs to the histone H1/H5 family.

It is found in the nucleus. The protein localises to the chromosome. Its function is as follows. Histones H1 are necessary for the condensation of nucleosome chains into higher-order structures. In Parechinus angulosus (Angulate sea urchin), this protein is Histone H1.2, embryonic.